The chain runs to 141 residues: Putative antirestriction protein YubI (141 aa).

This sequence belongs to the antirestriction protein family.

This chain is Putative antirestriction protein YubI (yubI), found in Escherichia coli (strain K12).